Reading from the N-terminus, the 429-residue chain is 3-phosphoshikimate 1-carboxyvinyltransferase (429 aa).

The 3-phosphoshikimate site is built by lysine 22, serine 23, and arginine 27. Lysine 22 is a binding site for phosphoenolpyruvate. The phosphoenolpyruvate site is built by glycine 94 and arginine 122. 3-phosphoshikimate contacts are provided by serine 167, glutamine 169, aspartate 315, and lysine 342. Glutamine 169 lines the phosphoenolpyruvate pocket. The active-site Proton acceptor is the aspartate 315. Arginine 346 and arginine 388 together coordinate phosphoenolpyruvate.

Belongs to the EPSP synthase family. Monomer.

The protein localises to the cytoplasm. The catalysed reaction is 3-phosphoshikimate + phosphoenolpyruvate = 5-O-(1-carboxyvinyl)-3-phosphoshikimate + phosphate. The protein operates within metabolic intermediate biosynthesis; chorismate biosynthesis; chorismate from D-erythrose 4-phosphate and phosphoenolpyruvate: step 6/7. Its function is as follows. Catalyzes the transfer of the enolpyruvyl moiety of phosphoenolpyruvate (PEP) to the 5-hydroxyl of shikimate-3-phosphate (S3P) to produce enolpyruvyl shikimate-3-phosphate and inorganic phosphate. The chain is 3-phosphoshikimate 1-carboxyvinyltransferase from Geobacter sp. (strain M21).